Reading from the N-terminus, the 346-residue chain is Protein MelA (346 aa).

VOC domains follow at residues 12–141 (GIEF…DFEA) and 155–305 (EVDH…IFTK). Residues histidine 158, histidine 237, and glutamate 314 each coordinate Fe cation.

The protein belongs to the 4HPPD family. Requires Fe cation as cofactor.

It is found in the cytoplasm. It participates in pigment biosynthesis; melanin biosynthesis. The protein is Protein MelA (melA) of Shewanella colwelliana (Alteromonas colwelliana).